Here is a 314-residue protein sequence, read N- to C-terminus: Ribonuclease Z (314 aa).

Residues His-61, His-63, Asp-65, His-66, His-137, Asp-207, and His-263 each contribute to the Zn(2+) site. Asp-65 serves as the catalytic Proton acceptor.

Belongs to the RNase Z family. As to quaternary structure, homodimer. Requires Zn(2+) as cofactor.

It catalyses the reaction Endonucleolytic cleavage of RNA, removing extra 3' nucleotides from tRNA precursor, generating 3' termini of tRNAs. A 3'-hydroxy group is left at the tRNA terminus and a 5'-phosphoryl group is left at the trailer molecule.. Zinc phosphodiesterase, which displays some tRNA 3'-processing endonuclease activity. Probably involved in tRNA maturation, by removing a 3'-trailer from precursor tRNA. In Thermococcus gammatolerans (strain DSM 15229 / JCM 11827 / EJ3), this protein is Ribonuclease Z.